A 503-amino-acid chain; its full sequence is Probable dolichyl pyrophosphate Man9GlcNAc2 alpha-1,3-glucosyltransferase (503 aa).

At 1-46 (MKERIKDKAWRPQFIKLNNPDTSKKIVSQKSKKPEIVDLSSPGNND) the chain is on the cytoplasmic side. A helical transmembrane segment spans residues 47–67 (LVTISILCVLLCFQLAISLNP). The Lumenal segment spans residues 68–151 (HSGESQPPMY…SRGYESIAHK (84 aa)). The chain crosses the membrane as a helical span at residues 152 to 172 (LFMRLSAIIPFYIFYLPPLIF). Residues 173–181 (YFTRSKKMS) lie on the Cytoplasmic side of the membrane. Residues 182–202 (PILYALALLYPSLLVIDNGHF) form a helical membrane-spanning segment. Residues 203 to 211 (QYNSISLGL) lie on the Lumenal side of the membrane. A helical transmembrane segment spans residues 212–232 (FLATYMFLTKNFTIIGSILFV). The Cytoplasmic segment spans residues 233-239 (AALNYKQ). Residues 240–257 (MELYHALPVFVFILARSI) form a helical membrane-spanning segment. Residues 258–268 (NKTQLFNSFRR) lie on the Lumenal side of the membrane. The helical transmembrane segment at 269-289 (ILTIGLFVVGTFLIIWLPFLL) threads the bilayer. Residues 290–332 (TGTAKDVIIRVFPFNRGLYEDKVASFWCAFSFILKRLPLQSVQ) lie on the Cytoplasmic side of the membrane. Residues 333–353 (IYISTALVLAGSAPSLLVLFL) form a helical membrane-spanning segment. At 354-359 (RPTEKQ) the chain is on the lumenal side. A helical transmembrane segment spans residues 360–379 (FRISLTATGLSFFLFSFHVH). Residues 380–382 (EKT) lie on the Cytoplasmic side of the membrane. The helical transmembrane segment at 383-403 (ILLAAVPALLLISEYTSLVIW) threads the bilayer. Residues 404-420 (FLNITNISIFSLCVKDN) are Lumenal-facing. A helical membrane pass occupies residues 421–441 (FALSLSFFFAYFVVSYAYTAP). Residues 442-443 (RK) lie on the Cytoplasmic side of the membrane. A helical membrane pass occupies residues 444 to 464 (ISHILTILIGFAICILELYGP). At 465-474 (SNQRFPHIYQ) the chain is on the lumenal side. The helical transmembrane segment at 475–495 (LANAFFSCVHFIYFLLYLSFA) threads the bilayer. The Cytoplasmic segment spans residues 496 to 503 (SFEKTKKE).

The protein belongs to the ALG6/ALG8 glucosyltransferase family.

The protein localises to the endoplasmic reticulum membrane. The enzyme catalyses an alpha-D-Man-(1-&gt;2)-alpha-D-Man-(1-&gt;2)-alpha-D-Man-(1-&gt;3)-[alpha-D-Man-(1-&gt;2)-alpha-D-Man-(1-&gt;3)-[alpha-D-Man-(1-&gt;2)-alpha-D-Man-(1-&gt;6)]-alpha-D-Man-(1-&gt;6)]-beta-D-Man-(1-&gt;4)-beta-D-GlcNAc-(1-&gt;4)-alpha-D-GlcNAc-diphospho-di-trans,poly-cis-dolichol + a di-trans,poly-cis-dolichyl beta-D-glucosyl phosphate = an alpha-D-Glc-(1-&gt;3)-alpha-D-Man-(1-&gt;2)-alpha-D-Man-(1-&gt;2)-alpha-D-Man-(1-&gt;3)-[alpha-D-Man-(1-&gt;2)-alpha-D-Man-(1-&gt;3)-[alpha-D-Man-(1-&gt;2)-alpha-D-Man-(1-&gt;6)]-alpha-D-Man-(1-&gt;6)]-beta-D-Man-(1-&gt;4)-beta-D-GlcNAc-(1-&gt;4)-alpha-D-GlcNAc-diphospho-di-trans,poly-cis-dolichol + a di-trans,poly-cis-dolichyl phosphate + H(+). The protein operates within protein modification; protein glycosylation. Adds the first glucose residue to the lipid-linked oligosaccharide precursor for N-linked glycosylation. Transfers glucose from dolichyl phosphate glucose (Dol-P-Glc) onto the lipid-linked oligosaccharide Man(9)GlcNAc(2)-PP-Dol. In Caenorhabditis elegans, this protein is Probable dolichyl pyrophosphate Man9GlcNAc2 alpha-1,3-glucosyltransferase.